The following is a 475-amino-acid chain: Ankyrin repeat, SAM and basic leucine zipper domain-containing protein 1 (475 aa).

The span at 1 to 10 (MAAGRLRGLA) shows a compositional bias: low complexity. The interval 1–24 (MAAGRLRGLAVAGGGESSESDDDG) is disordered. 3 positions are modified to phosphoserine: Ser17, Ser18, and Ser20. 6 ANK repeats span residues 45–74 (EKNE…SVDS), 78–107 (YGWT…NANF), 110–144 (DKQT…DPNV), 148–177 (RLMT…EVNT), 181–210 (SGYT…DKML), and 214–243 (DGNI…PLKG). The SAM domain maps to 272-334 (SYTAFGDLEV…KILAALKELD (63 aa)).

As to quaternary structure, interacts with DDX4, PIWIL1, RANBP9 and TDRD1.

The protein resides in the cytoplasm. In terms of biological role, plays a central role during spermatogenesis by repressing transposable elements and preventing their mobilization, which is essential for the germline integrity. Acts via the piRNA metabolic process, which mediates the repression of transposable elements during meiosis by forming complexes composed of piRNAs and Piwi proteins and governs the methylation and subsequent repression of transposons. Its association with pi-bodies suggests a participation in the primary piRNAs metabolic process. Required prior to the pachytene stage to facilitate the production of multiple types of piRNAs, including those associated with repeats involved in the regulation of retrotransposons. May act by mediating protein-protein interactions during germ cell maturation. This is Ankyrin repeat, SAM and basic leucine zipper domain-containing protein 1 (ASZ1) from Carollia perspicillata (Seba's short-tailed bat).